A 194-amino-acid polypeptide reads, in one-letter code: Cytochrome c biogenesis ATP-binding export protein CcmA (194 aa).

The region spanning 5-194 (LALDGVACIR…LDELVMGVLA (190 aa)) is the ABC transporter domain. 37–44 (GPNGAGKS) is a binding site for ATP.

The protein belongs to the ABC transporter superfamily. CcmA exporter (TC 3.A.1.107) family. As to quaternary structure, the complex is composed of two ATP-binding proteins (CcmA) and two transmembrane proteins (CcmB).

Its subcellular location is the cell inner membrane. The catalysed reaction is heme b(in) + ATP + H2O = heme b(out) + ADP + phosphate + H(+). Functionally, part of the ABC transporter complex CcmAB involved in the biogenesis of c-type cytochromes; once thought to export heme, this seems not to be the case, but its exact role is uncertain. Responsible for energy coupling to the transport system. In Sphingopyxis alaskensis (strain DSM 13593 / LMG 18877 / RB2256) (Sphingomonas alaskensis), this protein is Cytochrome c biogenesis ATP-binding export protein CcmA.